A 70-amino-acid chain; its full sequence is uncharacterized protein (70 aa).

The chain crosses the membrane as a helical span at residues 50–70; it reads INVVLVLIIALIIFILMLDGV.

It is found in the membrane. This is an uncharacterized protein from Dictyostelium discoideum (Social amoeba).